Consider the following 140-residue polypeptide: Profilin-1 (140 aa).

N-acetylalanine is present on A2. S28 is subject to Phosphoserine. Residue K54 forms a Glycyl lysine isopeptide (Lys-Gly) (interchain with G-Cter in SUMO2); alternate linkage. K54 is covalently cross-linked (Glycyl lysine isopeptide (Lys-Gly) (interchain with G-Cter in ubiquitin); alternate). Position 57 is a phosphoserine (S57). N6-acetyllysine is present on K108. Phosphotyrosine is present on Y129. S138 bears the Phosphoserine; by ROCK1 mark.

This sequence belongs to the profilin family. As to quaternary structure, found in a complex with XPO6, Ran, ACTB and PFN1. Interacts with ACTB. Interacts with VASP. Interacts with HTT. Interacts with SH3BGRL. Occurs in many kinds of cells as a complex with monomeric actin in a 1:1 ratio. Interacts with ACTMAP. Post-translationally, phosphorylation at Ser-138 reduces its affinity for G-actin and blocks its interaction with HTT, reducing its ability to inhibit androgen receptor (AR) and HTT aggregation.

It localises to the cytoplasm. The protein resides in the cytoskeleton. Its function is as follows. Binds to actin and affects the structure of the cytoskeleton. At high concentrations, profilin prevents the polymerization of actin, whereas it enhances it at low concentrations. By binding to PIP2, it inhibits the formation of IP3 and DG. Inhibits androgen receptor (AR) and HTT aggregation and binding of G-actin is essential for its inhibition of AR. The polypeptide is Profilin-1 (Pfn1) (Mus musculus (Mouse)).